A 146-amino-acid chain; its full sequence is UPF0735 ACT domain-containing protein CHY_1913 (146 aa).

One can recognise an ACT domain in the interval 70-145 (TLALNLEHRA…GVSKVELVGQ (76 aa)).

This sequence belongs to the UPF0735 family.

In Carboxydothermus hydrogenoformans (strain ATCC BAA-161 / DSM 6008 / Z-2901), this protein is UPF0735 ACT domain-containing protein CHY_1913.